The sequence spans 139 residues: Large ribosomal subunit protein bL17 (139 aa).

It belongs to the bacterial ribosomal protein bL17 family. Part of the 50S ribosomal subunit. Contacts protein L32.

This is Large ribosomal subunit protein bL17 from Cereibacter sphaeroides (strain ATCC 17029 / ATH 2.4.9) (Rhodobacter sphaeroides).